A 146-amino-acid polypeptide reads, in one-letter code: Large ribosomal subunit protein uL15 (146 aa).

Residues 1-56 (MSDIQLNTLKPAEGSKHAKRRVGRGIGSGLGKTAGRGHKGQKSRSGGFHKVGFEGG) are disordered. Residues 24-34 (RGIGSGLGKTA) show a composition bias toward gly residues.

The protein belongs to the universal ribosomal protein uL15 family. In terms of assembly, part of the 50S ribosomal subunit.

In terms of biological role, binds to the 23S rRNA. The polypeptide is Large ribosomal subunit protein uL15 (Bordetella bronchiseptica (strain ATCC BAA-588 / NCTC 13252 / RB50) (Alcaligenes bronchisepticus)).